Reading from the N-terminus, the 115-residue chain is MKFVLLFGVFLVTLFSYSSAEMLDDFDQAAEDELLSLIEKEEARAKECTPRFYDCSHDRHSCCRSELFKDVCTCFYPEGGDNEVCTCQQPKHLKYMEKAADKAKKFGGKIKKWFG.

The first 20 residues, 1-20 (MKFVLLFGVFLVTLFSYSSA), serve as a signal peptide directing secretion. Positions 21-44 (EMLDDFDQAAEDELLSLIEKEEAR) are excised as a propeptide. Disulfide bonds link Cys-48-Cys-63, Cys-55-Cys-72, Cys-62-Cys-87, and Cys-74-Cys-85.

The protein belongs to the neurotoxin 19 (CSTX) family. 01 subfamily. In terms of tissue distribution, expressed by the venom gland.

It is found in the secreted. The chain is U3-lycotoxin-Ls1a from Lycosa singoriensis (Wolf spider).